The sequence spans 232 residues: Ribose-5-phosphate isomerase A (232 aa).

Substrate is bound by residues Thr-28–Thr-31, Asp-83–Asp-86, and Lys-96–Gly-99. The Proton acceptor role is filled by Glu-105. Position 123 (Lys-123) interacts with substrate.

This sequence belongs to the ribose 5-phosphate isomerase family. Homodimer.

It catalyses the reaction aldehydo-D-ribose 5-phosphate = D-ribulose 5-phosphate. The protein operates within carbohydrate degradation; pentose phosphate pathway; D-ribose 5-phosphate from D-ribulose 5-phosphate (non-oxidative stage): step 1/1. Catalyzes the reversible conversion of ribose-5-phosphate to ribulose 5-phosphate. This Rhizobium etli (strain ATCC 51251 / DSM 11541 / JCM 21823 / NBRC 15573 / CFN 42) protein is Ribose-5-phosphate isomerase A.